A 363-amino-acid chain; its full sequence is UDP-3-O-acylglucosamine N-acyltransferase (363 aa).

Catalysis depends on H266, which acts as the Proton acceptor.

It belongs to the transferase hexapeptide repeat family. LpxD subfamily. Homotrimer.

The catalysed reaction is a UDP-3-O-[(3R)-3-hydroxyacyl]-alpha-D-glucosamine + a (3R)-hydroxyacyl-[ACP] = a UDP-2-N,3-O-bis[(3R)-3-hydroxyacyl]-alpha-D-glucosamine + holo-[ACP] + H(+). It functions in the pathway bacterial outer membrane biogenesis; LPS lipid A biosynthesis. Its function is as follows. Catalyzes the N-acylation of UDP-3-O-acylglucosamine using 3-hydroxyacyl-ACP as the acyl donor. Is involved in the biosynthesis of lipid A, a phosphorylated glycolipid that anchors the lipopolysaccharide to the outer membrane of the cell. In Bordetella parapertussis (strain 12822 / ATCC BAA-587 / NCTC 13253), this protein is UDP-3-O-acylglucosamine N-acyltransferase.